A 209-amino-acid polypeptide reads, in one-letter code: Ribosomal RNA large subunit methyltransferase E (209 aa).

S-adenosyl-L-methionine-binding residues include Gly-63, Trp-65, Asp-83, Asp-99, and Asp-124. The active-site Proton acceptor is the Lys-164.

This sequence belongs to the class I-like SAM-binding methyltransferase superfamily. RNA methyltransferase RlmE family.

Its subcellular location is the cytoplasm. It carries out the reaction uridine(2552) in 23S rRNA + S-adenosyl-L-methionine = 2'-O-methyluridine(2552) in 23S rRNA + S-adenosyl-L-homocysteine + H(+). Specifically methylates the uridine in position 2552 of 23S rRNA at the 2'-O position of the ribose in the fully assembled 50S ribosomal subunit. The sequence is that of Ribosomal RNA large subunit methyltransferase E from Shewanella loihica (strain ATCC BAA-1088 / PV-4).